The sequence spans 502 residues: Glycerate kinase (502 aa).

This sequence belongs to the glycerate kinase type-2 family.

The protein localises to the cytoplasm. It carries out the reaction (R)-glycerate + ATP = (2R)-3-phosphoglycerate + ADP + H(+). The sequence is that of Glycerate kinase (glyctk) from Danio rerio (Zebrafish).